Consider the following 68-residue polypeptide: MTKQSIVIVLFAAIAMMACLQRVTAEPAPEPIAAPIAEPYANPEAIASPEAKDLHTVVSAILQALGKK.

A signal peptide spans 1 to 25; sequence MTKQSIVIVLFAAIAMMACLQRVTA. 5 AXPX repeats span residues 25 to 28, 33 to 36, 37 to 40, 41 to 44, and 47 to 50; these read AEPA, AAPI, AEPY, ANPE, and ASPE. Positions 26-51 are excised as a propeptide; the sequence is EPAPEPIAAPIAEPYANPEAIASPEA. L65 is subject to Leucine amide.

In terms of tissue distribution, expressed by the venom gland.

Its subcellular location is the secreted. It localises to the target cell membrane. Its function is as follows. Antimicrobial peptide with strong activity against the fungi B.cinerea (MIC=5 uM) and C.albicans (MIC=33 uM), and no activity against the Gram-negative bacterium E.coli (MIC&gt;200 uM) and the Gram-positive bacterium S.aureus (MIC&gt;200 uM). Shows cytolytic activity against insect cell lines. Has no hemolytic activity against human erythrocytes. In vivo, peptide injection in the vicinity of the head and thorax of lepidopteran larvae induces feeding disorder that lasts one or two days before recovering. The chain is Venom peptide 3 from Orancistrocerus drewseni (Solitary wasp).